Reading from the N-terminus, the 356-residue chain is Phosphoribosylformylglycinamidine cyclo-ligase (356 aa).

Belongs to the AIR synthase family.

The protein resides in the cytoplasm. It catalyses the reaction 2-formamido-N(1)-(5-O-phospho-beta-D-ribosyl)acetamidine + ATP = 5-amino-1-(5-phospho-beta-D-ribosyl)imidazole + ADP + phosphate + H(+). It participates in purine metabolism; IMP biosynthesis via de novo pathway; 5-amino-1-(5-phospho-D-ribosyl)imidazole from N(2)-formyl-N(1)-(5-phospho-D-ribosyl)glycinamide: step 2/2. This Sinorhizobium fredii (strain NBRC 101917 / NGR234) protein is Phosphoribosylformylglycinamidine cyclo-ligase.